The primary structure comprises 529 residues: MPLDPGCLNGRVMKCLTFFLLLPETLKKSRKSARAQGKVQACYEIVPLALKKKMAAELYPASANTNIANSNAAANAKKNALQLQQAAPPPPQLHNLNNNNIESGNWQSFHPTLRERNALMFNNELMADVHFIVGPAGASKKVPVHKYILAVGSSVFYAMFYGDLAEVKSEIHIPDVEPAAFLILLKYLYSDEIDLEADTVLATLYAAKKYIVPALAKACVNFLETSLEAKNACVLLSQSRLFEEPDLTLRCWEVIDAQAELALKSEGFCEIDLQTLEIIVTRETLNTKEDVVFEAVLNWAEAECKRQGLSITPVNKRNVLGKALYLVRIPTMTLEEFANGAAQSDILTLEETRSIFLWYTAANKPQLEFPLIKRKGLAPQRCHRFQSSAYRSNQWRYRGRCDSIQFAVDKRIFIAGLGLYGSSCGKAEYSVKIELKRQGAVLAQNLTKFVSDGSSNTFSVWFEHPVQVEQDTFYTVSAILDGNELSYFGQEGMTEVQCGKVTFQFQCSSDSTNGTGVQGGQIPELIFYA.

The region spanning 127–197 (ADVHFIVGPA…LYSDEIDLEA (71 aa)) is the BTB domain.

In terms of assembly, homodimer and heterodimer. Interacts with cul3 via the BTB domain.

The protein resides in the cytoplasm. Its function is as follows. Adapter protein for the cul3 E3 ubiquitin-protein ligase complex. Involved in late neuronal development and muscle formation. The sequence is that of BTB/POZ domain-containing protein 6 (btbd6) from Xenopus tropicalis (Western clawed frog).